The following is a 292-amino-acid chain: CCR4-NOT transcription complex subunit 8 (292 aa).

The a divalent metal cation site is built by Asp40, Glu42, Asp161, and Asp230.

It belongs to the CAF1 family. In terms of assembly, component of the CCR4-NOT complex; distinct complexes seem to exist that differ in the participation of probably mutually exclusive catalytic subunits; the complex contains two deadenylase subunits, CNOT6 or CNOT6L, and CNOT7 or CNOT8. In the complex interacts directly with CNOT1. Interacts with BTG1, BTG2 and TOB1. Interacts with BTG4.

Its subcellular location is the cytoplasm. The protein resides in the nucleus. It catalyses the reaction Exonucleolytic cleavage of poly(A) to 5'-AMP.. Its function is as follows. Has 3'-5' poly(A) exoribonuclease activity for synthetic poly(A) RNA substrate. Its function seems to be partially redundant with that of CNOT7. Catalytic component of the CCR4-NOT complex which is linked to various cellular processes including bulk mRNA degradation, miRNA-mediated repression, translational repression during translational initiation and general transcription regulation. During miRNA-mediated repression the complex also seems to act as translational repressor during translational initiation. Additional complex functions may be a consequence of its influence on mRNA expression. Associates with members of the BTG family such as TOB1 and BTG2 and is required for their anti-proliferative activity. The polypeptide is CCR4-NOT transcription complex subunit 8 (CNOT8) (Homo sapiens (Human)).